We begin with the raw amino-acid sequence, 317 residues long: Protein RTA1 (317 aa).

Topologically, residues 1 to 16 (MAKDGFELYRYTPELG) are extracellular. The helical transmembrane segment at 17-37 (ASILFTVLFAVSGVAFVILLF) threads the bilayer. Residues 38 to 64 (HYSVKSKRRVGSLMKSQPVLRYYGTVN) are Cytoplasmic-facing. The chain crosses the membrane as a helical span at residues 65-85 (LAGAYIPFIFGCFVECVGFAF). Topologically, residues 86 to 99 (RCKSSKDTTLLNPY) are extracellular. The helical transmembrane segment at 100 to 120 (IIQTVFLLVSPTLYAASIYMI) threads the bilayer. Topologically, residues 121-142 (FGRMATLLFAENLMIMPARFNT) are cytoplasmic. The chain crosses the membrane as a helical span at residues 143-163 (TIFVIGDVGSLLLQAIGGAMM). Residues 164 to 178 (SKVTSASSGSHLVTA) lie on the Extracellular side of the membrane. Residues 179 to 199 (GLFIQIAFFGLFIINEVLFIF) form a helical membrane-spanning segment. The Cytoplasmic segment spans residues 200–214 (KMSKKPTNVSVRYGS). Residues 215 to 235 (WKYLNIALLVNSFLILIRSIV) form a helical membrane-spanning segment. Over 236 to 259 (RAVEFIQGYDGEIASHEWYLYIFD) the chain is Extracellular. Residues 260 to 280 (GLPMFLLVLIFIVAFPLINIF) form a helical membrane-spanning segment. Residues 281 to 317 (RIHEESIQAQQSARFDGTDYPDVEVTSIEEDLASKSE) lie on the Cytoplasmic side of the membrane.

This sequence belongs to the lipid-translocating exporter (LTE) (TC 9.A.26.1) family.

It localises to the membrane. Involved in 7-aminocholesterol resistance. This chain is Protein RTA1 (RTA1), found in Saccharomyces cerevisiae (strain ATCC 204508 / S288c) (Baker's yeast).